The primary structure comprises 298 residues: GTP cyclohydrolase FolE2 (298 aa).

Belongs to the GTP cyclohydrolase IV family.

The enzyme catalyses GTP + H2O = 7,8-dihydroneopterin 3'-triphosphate + formate + H(+). It participates in cofactor biosynthesis; 7,8-dihydroneopterin triphosphate biosynthesis; 7,8-dihydroneopterin triphosphate from GTP: step 1/1. Converts GTP to 7,8-dihydroneopterin triphosphate. In Xylella fastidiosa (strain M23), this protein is GTP cyclohydrolase FolE2.